We begin with the raw amino-acid sequence, 274 residues long: 3',5'-cyclic adenosine monophosphate phosphodiesterase CpdA (274 aa).

Fe cation contacts are provided by D21, H23, D63, N93, H163, H202, and H204. AMP contacts are provided by residues H23, D63, and 93–94 (NH). H204 is an AMP binding site.

This sequence belongs to the cyclic nucleotide phosphodiesterase class-III family. Requires Fe(2+) as cofactor.

It catalyses the reaction 3',5'-cyclic AMP + H2O = AMP + H(+). Hydrolyzes cAMP to 5'-AMP. Plays an important regulatory role in modulating the intracellular concentration of cAMP, thereby influencing cAMP-dependent processes. This is 3',5'-cyclic adenosine monophosphate phosphodiesterase CpdA from Vibrio vulnificus (strain CMCP6).